We begin with the raw amino-acid sequence, 112 residues long: SRA stem-loop-interacting RNA-binding protein, mitochondrial (112 aa).

Phosphoserine is present on Ser-15. Positions 19-98 (PIAFVRKIPW…IHVQAQRAKA (80 aa)) constitute an RRM domain. At Thr-104 the chain carries Phosphothreonine. Position 105 is a phosphoserine (Ser-105).

Its subcellular location is the mitochondrion. It localises to the nucleus. In terms of biological role, RNA-binding protein that acts as a nuclear receptor corepressor. Probably acts by binding the SRA RNA, and repressing the SRA-mediated nuclear receptor coactivation. Binds the STR7 loop of SRA RNA. Also able to repress glucocorticoid (GR), androgen (AR), thyroid (TR) and VDR-mediated transactivation. In Mus musculus (Mouse), this protein is SRA stem-loop-interacting RNA-binding protein, mitochondrial (Slirp).